A 385-amino-acid polypeptide reads, in one-letter code: Putative non-inhibitory serpin-Z11 (385 aa).

An RCL region spans residues 324-348; sequence GTTAVEAMYSPSSPGYSPGYQPPRP.

It belongs to the serpin family.

The polypeptide is Putative non-inhibitory serpin-Z11 (Oryza sativa subsp. japonica (Rice)).